The chain runs to 154 residues: Ubiquitin-like protein 4A (154 aa).

Residues 1–76 (MILTVKPLQG…LNLVVRPAGE (76 aa)) enclose the Ubiquitin-like domain.

Component of the bag6/bat3 complex.

It localises to the cytoplasm. The protein localises to the cytosol. The protein resides in the nucleus. Functionally, as part of a cytosolic protein quality control complex, the bag6/bat3 complex, maintains misfolded and hydrophobic patches-containing proteins in a soluble state and participates in their proper delivery to the endoplasmic reticulum or alternatively can promote their sorting to the proteasome where they undergo degradation. The bag6/bat3 complex is involved in the post-translational delivery of tail-anchored/type II transmembrane proteins to the endoplasmic reticulum membrane. Similarly, the bag6/bat3 complex also functions as a sorting platform for proteins of the secretory pathway that are mislocalized to the cytosol either delivering them to the proteasome for degradation or to the endoplasmic reticulum. The bag6/bat3 complex also plays a role in the endoplasmic reticulum-associated degradation (ERAD), a quality control mechanism that eliminates unwanted proteins of the endoplasmic reticulum through their retrotranslocation to the cytosol and their targeting to the proteasome. It maintains these retrotranslocated proteins in an unfolded yet soluble state condition in the cytosol to ensure their proper delivery to the proteasome. This chain is Ubiquitin-like protein 4A (ubl4a), found in Esox lucius (Northern pike).